We begin with the raw amino-acid sequence, 91 residues long: Large ribosomal subunit protein uL22 (91 aa).

Belongs to the universal ribosomal protein uL22 family. In terms of assembly, part of the 50S ribosomal subunit.

In terms of biological role, this protein binds specifically to 23S rRNA; its binding is stimulated by other ribosomal proteins, e.g. L4, L17, and L20. It is important during the early stages of 50S assembly. It makes multiple contacts with different domains of the 23S rRNA in the assembled 50S subunit and ribosome. Functionally, the globular domain of the protein is located near the polypeptide exit tunnel on the outside of the subunit, while an extended beta-hairpin is found that lines the wall of the exit tunnel in the center of the 70S ribosome. This is Large ribosomal subunit protein uL22 (rplV) from Clover yellow edge phytoplasma.